Reading from the N-terminus, the 220-residue chain is Ras-related protein Rab-3 (220 aa).

14 residues coordinate GTP: S30, G33, K34, T35, S36, T47, S48, S52, T53, G79, N134, D137, A165, and K166. T35 is a Mg(2+) binding site. The short motif at F50–F58 is the Effector region element. Residue T53 coordinates Mg(2+). The interval P194–C220 is disordered. Residues Q204 to C220 show a composition bias toward polar residues. S-geranylgeranyl cysteine attachment occurs at residues C218 and C220. A Cysteine methyl ester modification is found at C220.

Belongs to the small GTPase superfamily. Rab family. As to quaternary structure, interacts with Rph.

It is found in the cytoplasmic vesicle. It localises to the secretory vesicle. The protein localises to the synaptic vesicle. Functionally, involved in exocytosis by regulating a late step in synaptic vesicle fusion. Could play a role in neurotransmitter release by regulating membrane flow in the nerve terminal. The protein is Ras-related protein Rab-3 (Rab3) of Drosophila melanogaster (Fruit fly).